A 686-amino-acid chain; its full sequence is Rhophilin-2 (686 aa).

Positions 26–100 (NPLAQTGRSK…LEGLNISVGV (75 aa)) constitute an REM-1 domain. Positions 46-66 (QILKAVRMRTGAENLLKVATN) are interaction with Rho. The BRO1 domain occupies 111-502 (PLIPLGLKET…TDFFQKLGPL (392 aa)). The 79-residue stretch at 515–593 (RGIHFTVEEG…EEVEMKVVSL (79 aa)) folds into the PDZ domain. T655 is subject to Phosphothreonine.

This sequence belongs to the RHPN family. Interacts with GTP-bound RhoA and RhoB. Interacts with both GTP- and GDP-bound RhoA. Interacts with KRT18.

The protein resides in the cytoplasm. Its subcellular location is the perinuclear region. In terms of biological role, binds specifically to GTP-Rho. May function in a Rho pathway to limit stress fiber formation and/or increase the turnover of F-actin structures in the absence of high levels of RhoA activity. This is Rhophilin-2 (Rhpn2) from Mus musculus (Mouse).